The following is a 986-amino-acid chain: Bifunctional glutamine synthetase adenylyltransferase/adenylyl-removing enzyme (986 aa).

An adenylyl removase region spans residues 1–482 (MVTTVISNVK…RYGRLFAGEE (482 aa)). Residues 486-986 (SRFGSLVFTG…RAAYEAVVKG (501 aa)) are adenylyl transferase.

This sequence belongs to the GlnE family. Mg(2+) serves as cofactor.

It catalyses the reaction [glutamine synthetase]-O(4)-(5'-adenylyl)-L-tyrosine + phosphate = [glutamine synthetase]-L-tyrosine + ADP. It carries out the reaction [glutamine synthetase]-L-tyrosine + ATP = [glutamine synthetase]-O(4)-(5'-adenylyl)-L-tyrosine + diphosphate. Its function is as follows. Involved in the regulation of glutamine synthetase GlnA, a key enzyme in the process to assimilate ammonia. When cellular nitrogen levels are high, the C-terminal adenylyl transferase (AT) inactivates GlnA by covalent transfer of an adenylyl group from ATP to specific tyrosine residue of GlnA, thus reducing its activity. Conversely, when nitrogen levels are low, the N-terminal adenylyl removase (AR) activates GlnA by removing the adenylyl group by phosphorolysis, increasing its activity. The regulatory region of GlnE binds the signal transduction protein PII (GlnB) which indicates the nitrogen status of the cell. This Caulobacter vibrioides (strain ATCC 19089 / CIP 103742 / CB 15) (Caulobacter crescentus) protein is Bifunctional glutamine synthetase adenylyltransferase/adenylyl-removing enzyme.